The chain runs to 245 residues: tRNA pseudouridine synthase A (245 aa).

Residue D52 is the Nucleophile of the active site. Y111 contacts substrate.

This sequence belongs to the tRNA pseudouridine synthase TruA family. As to quaternary structure, homodimer.

It carries out the reaction uridine(38/39/40) in tRNA = pseudouridine(38/39/40) in tRNA. Functionally, formation of pseudouridine at positions 38, 39 and 40 in the anticodon stem and loop of transfer RNAs. This is tRNA pseudouridine synthase A from Rickettsia peacockii (strain Rustic).